The sequence spans 220 residues: tRNA (guanine-N(7)-)-methyltransferase (220 aa).

S-adenosyl-L-methionine is bound by residues E46, D71, D100, and D122. Residue D122 is part of the active site. Residues K126, D158, and 196 to 199 (TEYE) each bind substrate.

It belongs to the class I-like SAM-binding methyltransferase superfamily. TrmB family.

It catalyses the reaction guanosine(46) in tRNA + S-adenosyl-L-methionine = N(7)-methylguanosine(46) in tRNA + S-adenosyl-L-homocysteine. It participates in tRNA modification; N(7)-methylguanine-tRNA biosynthesis. Catalyzes the formation of N(7)-methylguanine at position 46 (m7G46) in tRNA. This Malacoplasma penetrans (strain HF-2) (Mycoplasma penetrans) protein is tRNA (guanine-N(7)-)-methyltransferase.